A 292-amino-acid polypeptide reads, in one-letter code: Lipoyl synthase (292 aa).

Residues C38, C43, C49, C64, C68, C71, and S277 each contribute to the [4Fe-4S] cluster site. In terms of domain architecture, Radical SAM core spans 50 to 266 (WSKGTATFML…KNRAESLGFR (217 aa)).

The protein belongs to the radical SAM superfamily. Lipoyl synthase family. [4Fe-4S] cluster is required as a cofactor.

It localises to the cytoplasm. It catalyses the reaction [[Fe-S] cluster scaffold protein carrying a second [4Fe-4S](2+) cluster] + N(6)-octanoyl-L-lysyl-[protein] + 2 oxidized [2Fe-2S]-[ferredoxin] + 2 S-adenosyl-L-methionine + 4 H(+) = [[Fe-S] cluster scaffold protein] + N(6)-[(R)-dihydrolipoyl]-L-lysyl-[protein] + 4 Fe(3+) + 2 hydrogen sulfide + 2 5'-deoxyadenosine + 2 L-methionine + 2 reduced [2Fe-2S]-[ferredoxin]. The protein operates within protein modification; protein lipoylation via endogenous pathway; protein N(6)-(lipoyl)lysine from octanoyl-[acyl-carrier-protein]: step 2/2. Functionally, catalyzes the radical-mediated insertion of two sulfur atoms into the C-6 and C-8 positions of the octanoyl moiety bound to the lipoyl domains of lipoate-dependent enzymes, thereby converting the octanoylated domains into lipoylated derivatives. The polypeptide is Lipoyl synthase (Chlorobium limicola (strain DSM 245 / NBRC 103803 / 6330)).